We begin with the raw amino-acid sequence, 506 residues long: Tabersonine 3-oxygenase (506 aa).

Topologically, residues 1–5 (MEFHE) are lumenal. The chain crosses the membrane as a helical span at residues 6–26 (SSPFVFITRGFIFIAISIAVL). Over 27–506 (RRIISKKTKT…DLQLIATSYA (480 aa)) the chain is Cytoplasmic. A heme-binding site is contributed by C450.

This sequence belongs to the cytochrome P450 family. It depends on heme as a cofactor. As to expression, expressed in leaf epidermis.

It localises to the endoplasmic reticulum membrane. The catalysed reaction is 16-methoxytabersonine + reduced [NADPH--hemoprotein reductase] + O2 = (3R)-1,2-didehydro-3-hydroxy-16-methoxy-2,3-dihydrotabersonine + oxidized [NADPH--hemoprotein reductase] + H2O + H(+). The enzyme catalyses (-)-tabersonine + reduced [NADPH--hemoprotein reductase] + O2 = (3R)-1,2-didehydro-3-hydroxy-2,3-dihydrotabersonine + oxidized [NADPH--hemoprotein reductase] + H2O + H(+). Its pathway is alkaloid biosynthesis; vindoline biosynthesis. In terms of biological role, cytochrome P450 catalyzing the monooxygenation of 16-methoxytabersonine, 16-hydroxytabersonine and tabersonine, but not of 2,3-dihydrotabersonine. Converts the C2,C3 alkene of tabersonine and 16-methoxytabersonine to the epoxides, which then spontaneously open to form the corresponding imine alcohols. Inactive in converting amyrin to ursolic acid. This is Tabersonine 3-oxygenase from Catharanthus roseus (Madagascar periwinkle).